The primary structure comprises 225 residues: Octanoyltransferase (225 aa).

The BPL/LPL catalytic domain occupies 42–219 (KNRQASMIFC…SICSALEYIN (178 aa)). Residues 79–86 (RGGKITWH), 149–151 (AIG), and 162–164 (GFA) contribute to the substrate site. Cys180 serves as the catalytic Acyl-thioester intermediate.

Belongs to the LipB family.

The protein localises to the cytoplasm. The enzyme catalyses octanoyl-[ACP] + L-lysyl-[protein] = N(6)-octanoyl-L-lysyl-[protein] + holo-[ACP] + H(+). Its pathway is protein modification; protein lipoylation via endogenous pathway; protein N(6)-(lipoyl)lysine from octanoyl-[acyl-carrier-protein]: step 1/2. Functionally, catalyzes the transfer of endogenously produced octanoic acid from octanoyl-acyl-carrier-protein onto the lipoyl domains of lipoate-dependent enzymes. Lipoyl-ACP can also act as a substrate although octanoyl-ACP is likely to be the physiological substrate. This chain is Octanoyltransferase, found in Tropheryma whipplei (strain TW08/27) (Whipple's bacillus).